The primary structure comprises 433 residues: Enolase (433 aa).

Glutamine 167 is a (2R)-2-phosphoglycerate binding site. Glutamate 209 serves as the catalytic Proton donor. 3 residues coordinate Mg(2+): aspartate 246, glutamate 291, and aspartate 318. (2R)-2-phosphoglycerate is bound by residues lysine 343, arginine 372, serine 373, and lysine 394. The active-site Proton acceptor is the lysine 343.

The protein belongs to the enolase family. In terms of assembly, component of the RNA degradosome, a multiprotein complex involved in RNA processing and mRNA degradation. Requires Mg(2+) as cofactor.

The protein localises to the cytoplasm. Its subcellular location is the secreted. It localises to the cell surface. It carries out the reaction (2R)-2-phosphoglycerate = phosphoenolpyruvate + H2O. The protein operates within carbohydrate degradation; glycolysis; pyruvate from D-glyceraldehyde 3-phosphate: step 4/5. Functionally, catalyzes the reversible conversion of 2-phosphoglycerate (2-PG) into phosphoenolpyruvate (PEP). It is essential for the degradation of carbohydrates via glycolysis. This chain is Enolase, found in Shewanella frigidimarina (strain NCIMB 400).